The chain runs to 289 residues: NFIL3 like protein (289 aa).

The disordered stretch occupies residues 1–27; it reads MDVGFSGLPDVSQSHSKTLWGARGRGP. The region spanning 42–105 is the bZIP domain; the sequence is DTVYWEKRRK…GLLPLTGGPR (64 aa). The basic motif stretch occupies residues 48–64; it reads KRRKNNEAAKRSREKRR. A leucine-zipper region spans residues 70 to 91; sequence IEGRLAALMEENALLKGELKAL.

This sequence belongs to the bZIP family. NFIL3 subfamily.

Its subcellular location is the nucleus. In Homo sapiens (Human), this protein is NFIL3 like protein.